Consider the following 410-residue polypeptide: Translation initiation factor 2 subunit gamma (410 aa).

One can recognise a tr-type G domain in the interval 9-202 (QAEVNIGMVG…AIEEFIPTPK (194 aa)). Positions 18-25 (GHVDHGKT) are G1. Mg(2+) contacts are provided by Asp-21, Thr-25, Gly-46, and Thr-48. Position 21 to 26 (21 to 26 (DHGKTT)) interacts with GTP. The segment at 46-50 (GITIK) is G2. Cys-61, Cys-64, Cys-73, and Cys-76 together coordinate Zn(2+). The G3 stretch occupies residues 90–93 (DAPG). GTP contacts are provided by residues 145 to 148 (NKIE) and 180 to 182 (SAL). Residues 145 to 148 (NKIE) are G4. The G5 stretch occupies residues 180–182 (SAL).

Belongs to the TRAFAC class translation factor GTPase superfamily. Classic translation factor GTPase family. EIF2G subfamily. As to quaternary structure, heterotrimer composed of an alpha, a beta and a gamma chain. Mg(2+) is required as a cofactor.

It catalyses the reaction GTP + H2O = GDP + phosphate + H(+). In terms of biological role, eIF-2 functions in the early steps of protein synthesis by forming a ternary complex with GTP and initiator tRNA. This Thermococcus kodakarensis (strain ATCC BAA-918 / JCM 12380 / KOD1) (Pyrococcus kodakaraensis (strain KOD1)) protein is Translation initiation factor 2 subunit gamma.